The sequence spans 292 residues: 4-hydroxy-tetrahydrodipicolinate synthase (292 aa).

Position 45 (T45) interacts with pyruvate. Y133 acts as the Proton donor/acceptor in catalysis. The active-site Schiff-base intermediate with substrate is K161. A pyruvate-binding site is contributed by I203.

It belongs to the DapA family. As to quaternary structure, homotetramer; dimer of dimers.

It localises to the cytoplasm. It carries out the reaction L-aspartate 4-semialdehyde + pyruvate = (2S,4S)-4-hydroxy-2,3,4,5-tetrahydrodipicolinate + H2O + H(+). It functions in the pathway amino-acid biosynthesis; L-lysine biosynthesis via DAP pathway; (S)-tetrahydrodipicolinate from L-aspartate: step 3/4. Catalyzes the condensation of (S)-aspartate-beta-semialdehyde [(S)-ASA] and pyruvate to 4-hydroxy-tetrahydrodipicolinate (HTPA). This chain is 4-hydroxy-tetrahydrodipicolinate synthase, found in Acidiphilium cryptum (strain JF-5).